We begin with the raw amino-acid sequence, 424 residues long: UDP-N-acetylglucosamine 1-carboxyvinyltransferase (424 aa).

22–23 (KN) contributes to the phosphoenolpyruvate binding site. Arg-98 lines the UDP-N-acetyl-alpha-D-glucosamine pocket. The Proton donor role is filled by Cys-122. Position 122 is a 2-(S-cysteinyl)pyruvic acid O-phosphothioketal (Cys-122). UDP-N-acetyl-alpha-D-glucosamine is bound by residues 127–131 (RPVDQ), Asp-312, and Ile-334.

The protein belongs to the EPSP synthase family. MurA subfamily.

The protein resides in the cytoplasm. The enzyme catalyses phosphoenolpyruvate + UDP-N-acetyl-alpha-D-glucosamine = UDP-N-acetyl-3-O-(1-carboxyvinyl)-alpha-D-glucosamine + phosphate. It functions in the pathway cell wall biogenesis; peptidoglycan biosynthesis. Functionally, cell wall formation. Adds enolpyruvyl to UDP-N-acetylglucosamine. This Xanthomonas oryzae pv. oryzae (strain MAFF 311018) protein is UDP-N-acetylglucosamine 1-carboxyvinyltransferase.